Consider the following 276-residue polypeptide: NH(3)-dependent NAD(+) synthetase (276 aa).

43–50 (GISGGVDS) provides a ligand contact to ATP. A Mg(2+)-binding site is contributed by aspartate 49. Deamido-NAD(+) is bound at residue arginine 146. Residue threonine 166 coordinates ATP. Glutamate 171 is a Mg(2+) binding site. Positions 179 and 186 each coordinate deamido-NAD(+). Lysine 195 and threonine 217 together coordinate ATP. Residue 266–267 (HK) participates in deamido-NAD(+) binding.

It belongs to the NAD synthetase family. Homodimer.

The catalysed reaction is deamido-NAD(+) + NH4(+) + ATP = AMP + diphosphate + NAD(+) + H(+). It participates in cofactor biosynthesis; NAD(+) biosynthesis; NAD(+) from deamido-NAD(+) (ammonia route): step 1/1. Its function is as follows. Catalyzes the ATP-dependent amidation of deamido-NAD to form NAD. Uses ammonia as a nitrogen source. This is NH(3)-dependent NAD(+) synthetase from Vibrio atlanticus (strain LGP32) (Vibrio splendidus (strain Mel32)).